A 403-amino-acid chain; its full sequence is Acetate kinase (403 aa).

Asn-7 contributes to the Mg(2+) binding site. Lys-14 contributes to the ATP binding site. Arg-97 lines the substrate pocket. Asp-154 acts as the Proton donor/acceptor in catalysis. ATP-binding positions include 213–217 (HLGNG), 287–289 (DMR), and 335–339 (GIGEN). Glu-388 lines the Mg(2+) pocket.

The protein belongs to the acetokinase family. Homodimer. The cofactor is Mg(2+). Mn(2+) serves as cofactor.

The protein resides in the cytoplasm. It catalyses the reaction acetate + ATP = acetyl phosphate + ADP. Its pathway is metabolic intermediate biosynthesis; acetyl-CoA biosynthesis; acetyl-CoA from acetate: step 1/2. In terms of biological role, catalyzes the formation of acetyl phosphate from acetate and ATP. Can also catalyze the reverse reaction. The sequence is that of Acetate kinase from Synechococcus sp. (strain JA-2-3B'a(2-13)) (Cyanobacteria bacterium Yellowstone B-Prime).